Consider the following 3707-residue polypeptide: Basement membrane-specific heparan sulfate proteoglycan core protein (3707 aa).

The signal sequence occupies residues 1-21 (MGQRAVGSLLLGLLLHARLLA). Residues S65, S71, and S76 are each glycosylated (O-linked (Xyl...) (heparan sulfate) serine). The region spanning 80–191 (QMVYFRALVN…WGFKFRRLGT (112 aa)) is the SEA domain. N89 is a glycosylation site (N-linked (GlcNAc...) asparagine). LDL-receptor class A domains lie at 195–234 (FPRVCTETEFACHSYNECVALEYRCDRRPDCRDMSDELNC), 281–319 (GPSACGPQEASCHSGHCIPRDYLCDGQEDCRDGSDELGC), 320–359 (ASPPPCEPNEFACENGHCALKLWRCDGDFDCEDRTDEANC), and 360–403 (SVKQ…EFGC). 13 disulfide bridges follow: C199/C212, C206/C225, C219/C234, C285/C297, C292/C310, C304/C319, C325/C337, C332/C350, C344/C359, C368/C381, C375/C394, C388/C403, and C428/C479. N-linked (GlcNAc...) asparagine glycosylation is present at N358. One can recognise an Ig-like C2-type 1 domain in the interval 404–504 (MPPQVVTPPQ…VLELVPQRGP (101 aa)). The 10-residue stretch at 521-530 (CFCFGVTNVC) folds into the Laminin EGF-like 1; first part domain. The region spanning 538–730 (DQIRLSFDQP…IHGRAHSVEE (193 aa)) is the Laminin IV type A 1 domain. Residue N554 is glycosylated (N-linked (GlcNAc...) asparagine). The Laminin EGF-like 1; second part domain maps to 731–763 (CRCPIGYSGLSCESCDAHFTRVPGGPYLGTCSG). Cystine bridges form between C764–C773, C766–C780, C783–C792, C795–C811, C814–C829, C816–C839, C842–C851, C854–C869, C879–C892, C894–C903, and C906–C921. 2 consecutive Laminin EGF-like domains span residues 764–813 (CNCN…ACRP) and 814–871 (CPCP…KCRP). Residues 879-923 (CDERGSLGTSGETCRCKNNVVGRLCNECSDGSFHLSKQNPDGCLK) enclose the Laminin EGF-like 4; truncated domain. The 10-residue stretch at 924–933 (CFCMGVSRQC) folds into the Laminin EGF-like 5; first part domain. Residues 941 to 1125 (AQVLGASEQP…GQDSAREVEQ (185 aa)) enclose the Laminin IV type A 2 domain. The region spanning 1126–1158 (CTCPPGYRGPSCQDCDTGYTRVPSGLYLGTCER) is the Laminin EGF-like 5; second part domain. Disulfide bonds link C1159-C1168, C1161-C1175, C1178-C1187, C1190-C1206, C1209-C1224, C1211-C1234, C1237-C1246, C1249-C1263, C1275-C1287, C1277-C1293, C1295-C1304, and C1307-C1322. 3 consecutive Laminin EGF-like domains span residues 1159 to 1208 (CNCH…DCQP), 1209 to 1265 (CPCY…PCHR), and 1275 to 1324 (CGCD…GCLP). Positions 1325–1334 (CFCMGVTQQC) constitute a Laminin EGF-like 9; first part domain. The Laminin IV type A 3 domain occupies 1344 to 1529 (ISTHFAPGDF…SGPRALEVEE (186 aa)). The Laminin EGF-like 9; second part domain maps to 1530–1562 (CRCPPGYVGLSCQDCAPGYTRTGSGLYLGQCEL). 8 disulfides stabilise this stretch: C1563–C1572, C1565–C1579, C1582–C1591, C1594–C1610, C1613–C1628, C1615–C1638, C1641–C1650, and C1653–C1668. 2 Laminin EGF-like domains span residues 1563–1612 (CECN…DCQP) and 1613–1670 (CACP…RCQP). Ig-like C2-type domains are found at residues 1677–1771 (EVQI…KPIM), 1772–1865 (VTVE…STAP), 1866–1954 (VASI…GGSG), 1955–2049 (PRVQ…PAPA), 2050–2148 (SPAP…PGVV), 2149–2244 (PPIR…PAPG), 2245–2343 (LAQP…RLRS), 2344–2436 (PVIS…PPTV), 2437–2532 (SVLP…APGT), 2533–2619 (PQVQ…VESP), 2620–2720 (PYAT…GGST), 2721–2809 (PTVQ…ALPS), 2810–2895 (VLIN…LVQA), and 2896–2980 (LPQI…LQVP). Residues 1713–1733 (DGRPLPSSAQQRHQGSELHFP) are disordered. Disulfide bonds link C1792/C1839, C1886/C1932, and C1976/C2021. The segment at 2039–2061 (SPSTNSPPAPASPAPIRIESSSS) is disordered. Residues 2052–2061 (APIRIESSSS) show a composition bias toward low complexity. 3 cysteine pairs are disulfide-bonded: C2073-C2118, C2170-C2215, and C2268-C2313. 3 N-linked (GlcNAc...) asparagine glycosylation sites follow: N2336, N2394, and N2427. Cysteines 2365 and 2413 form a disulfide. 2 disulfide bridges follow: C2456–C2506 and C2554–C2599. A glycan (N-linked (GlcNAc...) asparagine) is linked at N2600. Residues C2641 and C2686 are joined by a disulfide bond. 2 cysteine pairs are disulfide-bonded: C2831-C2876 and C2917-C2962. A Laminin G-like 1 domain is found at 2984–3162 (IPYFTQTPYS…VNLTTHGISH (179 aa)). N3098 and N3154 each carry an N-linked (GlcNAc...) asparagine glycan. 5 disulfide bridges follow: C3137-C3163, C3166-C3177, C3171-C3187, C3204-C3216, and C3229-C3238. An EGF-like domain is found at 3163–3241 (CPTCQDRPCQ…GRSGVRCEEG (79 aa)). The Laminin G-like 2 domain occupies 3245-3425 (TTPSMSGAGS…VGQCYDSSPC (181 aa)). N-linked (GlcNAc...) asparagine glycosylation is present at N3385. Cystine bridges form between C3393–C3419, C3425–C3436, C3430–C3446, C3448–C3457, C3464–C3476, C3470–C3481, and C3483–C3492. S3510 carries an O-linked (Xyl...) (chondroitin sulfate) serine glycan. A Laminin G-like 3 domain is found at 3518 to 3705 (QYGAYFYDNG…AQAGANTRPC (188 aa)). Ca(2+) is bound by residues D3574 and L3591. The segment at 3615-3617 (LRE) is mediates motor neuron attachment. The Ca(2+) site is built by A3641 and N3643. An intrachain disulfide couples C3671 to C3705. Residues 3680–3707 (ARPGAPPPQPLDLQHRAQAGANTRPCPS) form a disordered region.

In terms of assembly, has a strong tendency to aggregate in dimers or stellate structures. Interacts with other basement membrane components such as laminin, prolargin and collagen type IV. Interacts with COL13A1. Interacts with FGFBP1. Interacts with VWA1. Interacts (via C-terminus) with ECM1 (via C-terminus). Interacts with SVEP1. Post-translationally, proteolytic processing produces the C-terminal angiogenic peptide, endorepellin. This peptide can be further processed to produce the LG3 peptide. O-glycosylated. Contains three heparan sulfate chains. Also contains chondroitin sulfate.

Its subcellular location is the secreted. It localises to the extracellular space. It is found in the extracellular matrix. The protein localises to the basement membrane. Functionally, integral component of basement membranes. Component of the glomerular basement membrane (GBM), responsible for the fixed negative electrostatic membrane charge, and which provides a barrier which is both size- and charge-selective. It serves as an attachment substrate for cells. Plays essential roles in vascularization. Critical for normal heart development and for regulating the vascular response to injury. Also required for avascular cartilage development. Anti-angiogenic and anti-tumor peptide that inhibits endothelial cell migration, collagen-induced endothelial tube morphogenesis and blood vessel growth in the chorioallantoic membrane. Blocks endothelial cell adhesion to fibronectin and type I collagen. Anti-tumor agent in neovascularization. Interaction with its ligand, integrin alpha2/beta1, is required for the anti-angiogenic properties. Evokes a reduction in phosphorylation of receptor tyrosine kinases via alpha2/beta1 integrin-mediated activation of the tyrosine phosphatase, PTPN6. In terms of biological role, has anti-angiogenic properties that require binding of calcium ions for full activity. This chain is Basement membrane-specific heparan sulfate proteoglycan core protein (Hspg2), found in Mus musculus (Mouse).